Here is a 226-residue protein sequence, read N- to C-terminus: MDWSALQTILGGVNKHSTSIGKIWLTVLFIFRIMILVVAAKEVWGDEQADFVCNTLQPGCKNVCYDHYFPISHIRLWALQLIFVSTPALLVAMHVAYYRHEKKRKFIRGEIKTEFKDIEEIKNQKVRIEGSLWWTYTGSIFFRVIFEAAFMYVFYVMYDGFAMQRLVKCNAWPCPNTVDCFVSRPTEKTVFTVFMIAVSGICILLNVTELCYLLIRFCSGKSKKPV.

Residues 2–13 (DWSALQTILGGV) lie within the membrane without spanning it. Residues 14-20 (NKHSTSI) are Cytoplasmic-facing. A helical membrane pass occupies residues 21 to 40 (GKIWLTVLFIFRIMILVVAA). The Extracellular segment spans residues 41–73 (KEVWGDEQADFVCNTLQPGCKNVCYDHYFPISH). Ca(2+) contacts are provided by Glu42, Gly45, and Glu47. 3 cysteine pairs are disulfide-bonded: Cys53/Cys180, Cys60/Cys174, and Cys64/Cys169. A helical membrane pass occupies residues 74–94 (IRLWALQLIFVSTPALLVAMH). Residues 95–135 (VAYYRHEKKRKFIRGEIKTEFKDIEEIKNQKVRIEGSLWWT) lie on the Cytoplasmic side of the membrane. The chain crosses the membrane as a helical span at residues 136–156 (YTGSIFFRVIFEAAFMYVFYV). Topologically, residues 157-189 (MYDGFAMQRLVKCNAWPCPNTVDCFVSRPTEKT) are extracellular. A helical membrane pass occupies residues 190 to 210 (VFTVFMIAVSGICILLNVTEL). Over 211–226 (CYLLIRFCSGKSKKPV) the chain is Cytoplasmic.

The protein belongs to the connexin family. Beta-type (group I) subfamily. A hemichannel or connexon is composed of a hexamer of connexins. A functional gap junction is formed by the apposition of two hemichannels. Forms heteromeric channels with GJB4. Interacts with CNST.

It is found in the cell membrane. It localises to the cell junction. Its subcellular location is the gap junction. In terms of biological role, structural component of gap junctions. Gap junctions are dodecameric channels that connect the cytoplasm of adjoining cells. They are formed by the docking of two hexameric hemichannels, one from each cell membrane. Small molecules and ions diffuse from one cell to a neighboring cell via the central pore. This chain is Gap junction beta-2 protein (GJB2), found in Ovis aries (Sheep).